Here is a 65-residue protein sequence, read N- to C-terminus: Large ribosomal subunit protein bL35 (65 aa).

It belongs to the bacterial ribosomal protein bL35 family.

The protein is Large ribosomal subunit protein bL35 of Caldicellulosiruptor saccharolyticus (strain ATCC 43494 / DSM 8903 / Tp8T 6331).